The primary structure comprises 646 residues: MPPEQVRARKTPRSWGALTPSLAPWILDYLSSMGFEQPTPVQKSCFDIFRGNKDVVVEAVTGSGKTLAFLIPVVERLLRSEDPAKRHHVQAIIISPTRELASQIYNVLVSFLKFHAPSAHLLPHAKGDEKRPATTEPVVVPQLLVGGTTKAAEDLSTFLRLSPNILIGTPGRLAELLSTPYVKAPSSSFEVLVMDEADRLLDLGFSQELTRILGYLPKQRRTGLFSASLSEAVERLITVGLLYPHKITVRVKSLRDGGIVQERKTPMSLQMSYIVTPASQKIPALCQLLERLEPRPSRSIVFFSTCFAVKYFARVLHGILPPGFSIVSLHGKLEPQVREKNFERFVNAASPTVLLTTDIAARGLDIPQVDLVVQHDPPTDTKVFIHRCGRAGRAGRRGLAVVMLQPGREEGYVQLLDVRQTPISPLAKPPVSVTAADADLASSRIRAQARADRDIYQLAQRAFVSWARSYIEHQATSIFRVADLDWADLAQGYGLLELPKMPEVRGLDRSLGLAIDTESIPFRDGAREKKRLAELEQWKKEKAAREAQRASGGGGDATDPLKRKKNEAWSGKHEHEDVKAARREKKRRKREAQRLGDMTEPEREEQRKLDEMIAEVRRRNAEAPTPAAQAAGSGGGGGDEFEGFDD.

Residues 15–43 carry the Q motif motif; that stretch reads WGALTPSLAPWILDYLSSMGFEQPTPVQK. The region spanning 46-247 is the Helicase ATP-binding domain; the sequence is FDIFRGNKDV…TVGLLYPHKI (202 aa). 59 to 66 provides a ligand contact to ATP; it reads AVTGSGKT. The DEAD box signature appears at 195–198; sequence DEAD. The 151-residue stretch at 284–434 folds into the Helicase C-terminal domain; it reads ALCQLLERLE…PLAKPPVSVT (151 aa). Composition is skewed to basic and acidic residues over residues 539-548 and 566-581; these read KKEKAAREAQ and NEAW…VKAA. The interval 539 to 646 is disordered; it reads KKEKAAREAQ…GGDEFEGFDD (108 aa). A coiled-coil region spans residues 572–623; sequence KHEHEDVKAARREKKRRKREAQRLGDMTEPEREEQRKLDEMIAEVRRRNAEA. The span at 582 to 591 shows a compositional bias: basic residues; it reads RREKKRRKRE. Over residues 600 to 621 the composition is skewed to basic and acidic residues; that stretch reads EPEREEQRKLDEMIAEVRRRNA. A compositionally biased stretch (low complexity) spans 622–631; sequence EAPTPAAQAA.

Belongs to the DEAD box helicase family. DDX55/SPB4 subfamily. In terms of assembly, component of pre-60S ribosomal complexes.

The protein resides in the nucleus. It is found in the nucleolus. It catalyses the reaction ATP + H2O = ADP + phosphate + H(+). Its function is as follows. ATP-binding RNA helicase involved in the biogenesis of 60S ribosomal subunits. Binds 90S pre-ribosomal particles and dissociates from pre-60S ribosomal particles after processing of 27SB pre-rRNA. Required for the normal formation of 18S rRNA through the processing of pre-rRNAs at sites A0, A1 and A2, and the normal formation of 25S and 5.8S rRNAs through the processing of pre-rRNAs at sites C1 and C2. This chain is ATP-dependent rRNA helicase SPB4, found in Chaetomium globosum (strain ATCC 6205 / CBS 148.51 / DSM 1962 / NBRC 6347 / NRRL 1970) (Soil fungus).